We begin with the raw amino-acid sequence, 431 residues long: Tyrosine--tRNA ligase (431 aa).

L-tyrosine is bound at residue Y34. The 'HIGH' region motif lies at 39–48 (PTADSLHIGH). Residues Y171 and Q175 each coordinate L-tyrosine. The 'KMSKS' region signature appears at 231–235 (KFGKT). K234 contacts ATP. Positions 353–422 (INVVEALVKT…GKYTILRRGK (70 aa)) constitute an S4 RNA-binding domain.

It belongs to the class-I aminoacyl-tRNA synthetase family. TyrS type 1 subfamily. Homodimer.

Its subcellular location is the cytoplasm. The enzyme catalyses tRNA(Tyr) + L-tyrosine + ATP = L-tyrosyl-tRNA(Tyr) + AMP + diphosphate + H(+). In terms of biological role, catalyzes the attachment of tyrosine to tRNA(Tyr) in a two-step reaction: tyrosine is first activated by ATP to form Tyr-AMP and then transferred to the acceptor end of tRNA(Tyr). This Neisseria meningitidis serogroup C (strain 053442) protein is Tyrosine--tRNA ligase.